Reading from the N-terminus, the 351-residue chain is Fe(3+) ions import ATP-binding protein FbpC (351 aa).

An ABC transporter domain is found at 7–241; sequence LTVKNLNKFF…PNHLETAKFM (235 aa). 39-46 is a binding site for ATP; the sequence is GASGCGKT.

The protein belongs to the ABC transporter superfamily. Fe(3+) ion importer (TC 3.A.1.10) family. The complex is composed of two ATP-binding proteins (FbpC), two transmembrane proteins (FbpB) and a solute-binding protein (FbpA).

The protein resides in the cell inner membrane. It catalyses the reaction Fe(3+)(out) + ATP + H2O = Fe(3+)(in) + ADP + phosphate + H(+). Its function is as follows. Part of the ABC transporter complex FbpABC involved in Fe(3+) ions import. Responsible for energy coupling to the transport system. The chain is Fe(3+) ions import ATP-binding protein FbpC from Haemophilus influenzae (strain 86-028NP).